A 1248-amino-acid chain; its full sequence is Probable serine/threonine-protein kinase DDB_G0278509 (1248 aa).

Disordered regions lie at residues 1-26, 40-61, 100-125, 180-220, and 235-338; these read MSKVIGYIDYGDPDGNEEPSKQNGEY, SVNGGYDKDNNNHHHHNQEEDY, QSYKLSNSGESMNRSINQSKEEDHLE, QNNN…TKNN, and SIDS…NNNK. Over residues 102–117 the composition is skewed to polar residues; that stretch reads YKLSNSGESMNRSINQ. Low complexity predominate over residues 181-216; it reads NNNNNNSNSNSNSNSNSNNNNNNNNNNNNNNNNNNN. LRR repeat units lie at residues 386–407, 411–432, 435–457, 458–480, 481–502, 503–524, 527–548, 572–593, 595–616, 619–641, 642–663, 665–687, and 688–708; these read SSTELDLSEQELNEFPIFDEKE, GYKIIDLSFNNIKSIPLDAFTN, NLEQLIMFNNNLSDVPSSIEFLK, HLTILDLSHNNLHEICRELGNLS, FLRELYLSNNSLKKFPTTGNLY, NLKKLILDNNQITTIPIECVEP, QLQTLDLSFNKIGTITSSTTTT, NLKQLNLSHNELQEIPSSLRHL, KLHSLSIDYNQISVLPDKVVAS, RLAKLTISNNKIKQLPFAINNLS, SLIELNASNNVIELLPDSICYL, NLKKLNLNNNNLKELPSNIGFLT, and KLVDLQLYNNQISSLPISFLK. The segment at 825–873 is disordered; it reads YPFQKLDPIPQSLYSSSNPRSHTESDIQKLKNNDETITTTNSSISTTSS. The segment covering 845-858 has biased composition (basic and acidic residues); it reads SHTESDIQKLKNND. Over residues 860–873 the composition is skewed to low complexity; sequence TITTTNSSISTTSS. One can recognise a Protein kinase domain in the interval 946–1239; that stretch reads IQFFNLIGQG…SIYHRLENLM (294 aa). ATP contacts are provided by residues 952-960 and Lys973; that span reads IGQGGFSKV. Catalysis depends on Asp1069, which acts as the Proton acceptor. The disordered stretch occupies residues 1106–1135; the sequence is NNTNNTATSSTTTSSANGANSISNNNNNGT.

This sequence belongs to the protein kinase superfamily. TKL Ser/Thr protein kinase family.

It catalyses the reaction L-seryl-[protein] + ATP = O-phospho-L-seryl-[protein] + ADP + H(+). The catalysed reaction is L-threonyl-[protein] + ATP = O-phospho-L-threonyl-[protein] + ADP + H(+). This chain is Probable serine/threonine-protein kinase DDB_G0278509, found in Dictyostelium discoideum (Social amoeba).